The primary structure comprises 112 residues: UPF0060 membrane protein Arth_4238 (112 aa).

Transmembrane regions (helical) follow at residues 7-27 (ILLF…VWQA), 33-53 (EWWW…AATL), 62-82 (ILAA…MVFD), and 88-108 (RWDI…MFAP).

The protein belongs to the UPF0060 family.

The protein resides in the cell membrane. This is UPF0060 membrane protein Arth_4238 from Arthrobacter sp. (strain FB24).